A 219-amino-acid chain; its full sequence is Outer spore wall protein 4 (219 aa).

Positions methionine 1–threonine 19 are cleaved as a signal peptide. At asparagine 20–arginine 170 the chain is on the extracellular side. Asparagine 42, asparagine 62, and asparagine 136 each carry an N-linked (GlcNAc...) asparagine glycan. A helical transmembrane segment spans residues isoleucine 171–valine 191. Topologically, residues alanine 192–proline 193 are cytoplasmic. The chain crosses the membrane as a helical span at residues phenylalanine 194–isoleucine 214. The Extracellular portion of the chain corresponds to tyrosine 215–glutamine 219.

This sequence belongs to the OSW4/6 family. Post-translationally, N-glycosylated.

It localises to the membrane. Involved in spore wall assembly. May be involved in maintaining genome integrity. The sequence is that of Outer spore wall protein 4 from Saccharomyces cerevisiae (strain ATCC 204508 / S288c) (Baker's yeast).